The following is a 658-amino-acid chain: Probable rhamnogalacturonate lyase B (658 aa).

The signal sequence occupies residues 1–19 (MRFAIPLGAACAWAGVALA). 10 N-linked (GlcNAc...) asparagine glycosylation sites follow: asparagine 110, asparagine 143, asparagine 239, asparagine 280, asparagine 522, asparagine 530, asparagine 564, asparagine 571, asparagine 592, and asparagine 633.

The protein belongs to the polysaccharide lyase 4 family.

The protein localises to the secreted. The enzyme catalyses Endotype eliminative cleavage of L-alpha-rhamnopyranosyl-(1-&gt;4)-alpha-D-galactopyranosyluronic acid bonds of rhamnogalacturonan I domains in ramified hairy regions of pectin leaving L-rhamnopyranose at the reducing end and 4-deoxy-4,5-unsaturated D-galactopyranosyluronic acid at the non-reducing end.. Its function is as follows. Pectinolytic enzymes consist of four classes of enzymes: pectin lyase, polygalacturonase, pectin methylesterase and rhamnogalacturonase. Degrades the rhamnogalacturonan I (RG-I) backbone of pectin. The sequence is that of Probable rhamnogalacturonate lyase B (rglB) from Neosartorya fischeri (strain ATCC 1020 / DSM 3700 / CBS 544.65 / FGSC A1164 / JCM 1740 / NRRL 181 / WB 181) (Aspergillus fischerianus).